The following is a 188-amino-acid chain: Trafficking protein particle complex subunit 5 (188 aa).

It belongs to the TRAPP small subunits family. BET3 subfamily. Part of the multisubunit TRAPP (transport protein particle) complex.

It localises to the golgi apparatus. The protein localises to the cis-Golgi network. Its subcellular location is the endoplasmic reticulum. In terms of biological role, may play a role in vesicular transport from endoplasmic reticulum to Golgi. This is Trafficking protein particle complex subunit 5 (TRAPPC5) from Gallus gallus (Chicken).